The sequence spans 212 residues: MAIACAAAPGLRGAEPFNGAALATSAKSSSAMKMSFESEIGAQPPIGFWDPLGLVADADQERFDRLRYVEIKHGRIAMLAVVGHITQQNTRLPGMLSFKENLAFADSPNGVAAFSKIPPLGTLQIILAIGCHELFVVKQVEGSFPGDCTTGGNIFQSAWDNMSEETQASKRAIELNNGRAAQMGILAMMVHEQLSNQPYIINDLAGAAYQFN.

Residues 1–34 (MAIACAAAPGLRGAEPFNGAALATSAKSSSAMKM) constitute a chloroplast transit peptide. Transmembrane regions (helical) follow at residues 76–96 (IAML…PGML), 117–137 (IPPL…LFVV), and 178–198 (GRAA…SNQP).

This sequence belongs to the fucoxanthin chlorophyll protein family. The LHC complex of chromophytic algae is composed of fucoxanthin, chlorophyll A and C bound non-covalently by fucoxanthin chlorophyll proteins (FCPs). The ratio of pigments in this LHC is; fucoxanthin: chlorophyll C: chlorophyll A; (0.6-1): (0.1-0.3): (1).

Its subcellular location is the plastid. The protein localises to the chloroplast thylakoid membrane. The light-harvesting complex (LHC) functions as a light receptor, it captures and delivers excitation energy to photosystems with which it is closely associated. Energy is transferred from the carotenoid and chlorophyll C (or B) to chlorophyll A and the photosynthetic reaction centers where it is used to synthesize ATP and reducing power. The protein is Fucoxanthin-chlorophyll a-c binding protein E, chloroplastic (FCPE) of Macrocystis pyrifera (Giant kelp).